The primary structure comprises 78 residues: Large ribosomal subunit protein bL28 (78 aa).

Positions 1-20 are enriched in polar residues; the sequence is MSRVCQLTGTRANNGMSVSH. The tract at residues 1–23 is disordered; it reads MSRVCQLTGTRANNGMSVSHSHI.

It belongs to the bacterial ribosomal protein bL28 family.

In Prochlorococcus marinus (strain NATL2A), this protein is Large ribosomal subunit protein bL28.